The primary structure comprises 199 residues: NAD(P)H dehydrogenase (quinone) (199 aa).

The Flavodoxin-like domain maps to 4 to 190; sequence MLVLYYSAYG…DGARFQGRRV (187 aa). FMN contacts are provided by residues 10-15 and 78-80; these read SAYGHM and TRY. Y12 contacts NAD(+). W98 lines the substrate pocket. Residues 113-119 and H134 each bind FMN; that span reads STATQYG. Residues 161–181 are disordered; sequence YGMTTTADGDGSRQPSAQELD. Residues 163–177 show a composition bias toward polar residues; it reads MTTTADGDGSRQPSA.

Belongs to the WrbA family. Requires FMN as cofactor.

It carries out the reaction a quinone + NADH + H(+) = a quinol + NAD(+). It catalyses the reaction a quinone + NADPH + H(+) = a quinol + NADP(+). The polypeptide is NAD(P)H dehydrogenase (quinone) (Brucella canis (strain ATCC 23365 / NCTC 10854 / RM-666)).